A 248-amino-acid polypeptide reads, in one-letter code: Probable transcriptional regulatory protein BARBAKC583_0163 (248 aa).

This sequence belongs to the TACO1 family.

It is found in the cytoplasm. This is Probable transcriptional regulatory protein BARBAKC583_0163 from Bartonella bacilliformis (strain ATCC 35685 / KC583 / Herrer 020/F12,63).